Reading from the N-terminus, the 160-residue chain is UPF0178 protein PA14_69280 (160 aa).

It belongs to the UPF0178 family.

This is UPF0178 protein PA14_69280 from Pseudomonas aeruginosa (strain UCBPP-PA14).